We begin with the raw amino-acid sequence, 299 residues long: Bifunctional protein FolD (299 aa).

NADP(+)-binding positions include 166–168, S191, and I232; that span reads GRS.

Belongs to the tetrahydrofolate dehydrogenase/cyclohydrolase family. As to quaternary structure, homodimer.

The catalysed reaction is (6R)-5,10-methylene-5,6,7,8-tetrahydrofolate + NADP(+) = (6R)-5,10-methenyltetrahydrofolate + NADPH. The enzyme catalyses (6R)-5,10-methenyltetrahydrofolate + H2O = (6R)-10-formyltetrahydrofolate + H(+). The protein operates within one-carbon metabolism; tetrahydrofolate interconversion. In terms of biological role, catalyzes the oxidation of 5,10-methylenetetrahydrofolate to 5,10-methenyltetrahydrofolate and then the hydrolysis of 5,10-methenyltetrahydrofolate to 10-formyltetrahydrofolate. The polypeptide is Bifunctional protein FolD (Dinoroseobacter shibae (strain DSM 16493 / NCIMB 14021 / DFL 12)).